The following is a 134-amino-acid chain: Phosphoribosyl-AMP cyclohydrolase (134 aa).

Asp-80 serves as a coordination point for Mg(2+). Cys-81 lines the Zn(2+) pocket. Positions 82 and 84 each coordinate Mg(2+). Zn(2+)-binding residues include Cys-98 and Cys-105.

This sequence belongs to the PRA-CH family. As to quaternary structure, homodimer. Requires Mg(2+) as cofactor. The cofactor is Zn(2+).

It is found in the cytoplasm. It carries out the reaction 1-(5-phospho-beta-D-ribosyl)-5'-AMP + H2O = 1-(5-phospho-beta-D-ribosyl)-5-[(5-phospho-beta-D-ribosylamino)methylideneamino]imidazole-4-carboxamide. It functions in the pathway amino-acid biosynthesis; L-histidine biosynthesis; L-histidine from 5-phospho-alpha-D-ribose 1-diphosphate: step 3/9. Catalyzes the hydrolysis of the adenine ring of phosphoribosyl-AMP. The protein is Phosphoribosyl-AMP cyclohydrolase of Bordetella petrii (strain ATCC BAA-461 / DSM 12804 / CCUG 43448).